A 126-amino-acid polypeptide reads, in one-letter code: Large ribosomal subunit protein bL12 (126 aa).

Belongs to the bacterial ribosomal protein bL12 family. As to quaternary structure, homodimer. Part of the ribosomal stalk of the 50S ribosomal subunit. Forms a multimeric L10(L12)X complex, where L10 forms an elongated spine to which 2 to 4 L12 dimers bind in a sequential fashion. Binds GTP-bound translation factors.

Functionally, forms part of the ribosomal stalk which helps the ribosome interact with GTP-bound translation factors. Is thus essential for accurate translation. The polypeptide is Large ribosomal subunit protein bL12 (Trichlorobacter lovleyi (strain ATCC BAA-1151 / DSM 17278 / SZ) (Geobacter lovleyi)).